A 428-amino-acid polypeptide reads, in one-letter code: MRVQRPKGTVDILPETSGQWEKVEQTARDLFKRANYHEIRTPSFENYELFSRSSGETSDVVEKEMYDFEDKGGRHIALRPEGTAGVVRAYVENKIYGPDYVKPFNVYYIAAMYRYERPQAGRQREFHQIGVESFGSNGYLADVETILLGHDLLAELGVKNYELHINTLGDSEVRQAYHDALVDYFTPVKDQLSEDSQRRLGKNPLRILDSKAEEDQQFLSEAPKIRDYLDEESKENFNKILASLDKLGVKYVIDDDLVRGLDYYTGVIFEFMVDDPTLWASPSTVLGGGRYNHLVEEFSGPETPAVGFGIGEERLMLVLSKQNPEMFEDQGIDFFITNIGEGTDIKAVEVARQLRSLGFSAQYDVDQKKLKAQFRKADRVGARYVVTLGAKELAEGKLTVKRLSDGQQFSLEFTDLEDKANLLSKIEK.

It belongs to the class-II aminoacyl-tRNA synthetase family. Homodimer.

Its subcellular location is the cytoplasm. It catalyses the reaction tRNA(His) + L-histidine + ATP = L-histidyl-tRNA(His) + AMP + diphosphate + H(+). The sequence is that of Histidine--tRNA ligase from Lactobacillus delbrueckii subsp. bulgaricus (strain ATCC BAA-365 / Lb-18).